Reading from the N-terminus, the 123-residue chain is Small ribosomal subunit protein uS12c (123 aa).

Belongs to the universal ribosomal protein uS12 family. As to quaternary structure, part of the 30S ribosomal subunit.

The protein localises to the plastid. Its subcellular location is the chloroplast. Functionally, with S4 and S5 plays an important role in translational accuracy. Located at the interface of the 30S and 50S subunits. This chain is Small ribosomal subunit protein uS12c (rps12), found in Oenothera elata subsp. hookeri (Hooker's evening primrose).